The primary structure comprises 568 residues: Oxygen-dependent choline dehydrogenase (568 aa).

FAD is bound at residue D8–E37. H473 acts as the Proton acceptor in catalysis.

It belongs to the GMC oxidoreductase family. FAD serves as cofactor.

The enzyme catalyses choline + A = betaine aldehyde + AH2. It catalyses the reaction betaine aldehyde + NAD(+) + H2O = glycine betaine + NADH + 2 H(+). It functions in the pathway amine and polyamine biosynthesis; betaine biosynthesis via choline pathway; betaine aldehyde from choline (cytochrome c reductase route): step 1/1. Involved in the biosynthesis of the osmoprotectant glycine betaine. Catalyzes the oxidation of choline to betaine aldehyde and betaine aldehyde to glycine betaine at the same rate. This is Oxygen-dependent choline dehydrogenase from Staphylococcus haemolyticus (strain JCSC1435).